The sequence spans 261 residues: tRNA 5-carboxymethoxyuridine methyltransferase (261 aa).

Residues Arg26, 52 to 53 (GG), Asp73, 102 to 103 (AQ), and His119 contribute to the S-adenosyl-L-methionine site.

It belongs to the class I-like SAM-binding methyltransferase superfamily. CmoM family.

It catalyses the reaction 5-carboxymethoxyuridine(34) in tRNA + S-adenosyl-L-methionine = 5-methoxycarbonylmethoxyuridine(34) in tRNA + S-adenosyl-L-homocysteine. In terms of biological role, catalyzes the methylation of 5-carboxymethoxyuridine (cmo5U) to form 5-methoxycarbonylmethoxyuridine (mcmo5U) at position 34 in tRNAs. Four tRNAs (tRNA(Ala1), tRNA(Ser1), tRNA(Pro3) and tRNA(Thr4)) are fully modified with mcmo5U in stationary-phase E.coli. Also present at low frequency in tRNA(Leu3) and tRNA(Val1). This is tRNA 5-carboxymethoxyuridine methyltransferase from Escherichia coli (strain K12).